The following is a 336-amino-acid chain: Iron-uptake system permease protein FeuC (336 aa).

9 consecutive transmembrane segments (helical) span residues 7-27 (LFIA…SFSV), 57-77 (VVMA…IQAI), 85-105 (PGIL…MLLF), 120-140 (MPLF…IFAW), 150-170 (IILV…FLSL), 191-211 (ANWT…PILI), 246-266 (VAII…GLIA), 280-300 (YILP…DFAG), and 308-328 (EVPA…YLLF).

The protein belongs to the binding-protein-dependent transport system permease family. FecCD subfamily. In terms of assembly, the complex is composed of one ATP-binding protein (YusV), two transmembrane proteins (FeuB and FeuC) and a solute-binding protein (FeuA).

The protein localises to the cell membrane. In terms of biological role, involved in the uptake of iron. Probably responsible for the translocation of the substrate across the membrane. Part of the ABC transporter complex FeuABC/YusV involved in import of the catecholate siderophores bacillibactin and enterobactin. This chain is Iron-uptake system permease protein FeuC (feuC), found in Bacillus subtilis (strain 168).